The sequence spans 314 residues: Transcriptional activator RhrA (314 aa).

An HTH araC/xylS-type domain is found at 210–310 (ASIKMRVEQN…GVRPSDLRRL (101 aa)). DNA-binding regions (H-T-H motif) lie at residues 228 to 249 (TDVAEAERITPRAIQKFFSREG) and 277 to 300 (ISQIAYNVGFNDLSYFNRTFRSRY).

Transcriptional activator of the rhizobactin regulon. This chain is Transcriptional activator RhrA (rhrA), found in Rhizobium meliloti (strain 1021) (Ensifer meliloti).